The following is a 296-amino-acid chain: Bifunctional protein FolD (296 aa).

NADP(+)-binding positions include 166–168 (GRS), serine 195, and threonine 236.

The protein belongs to the tetrahydrofolate dehydrogenase/cyclohydrolase family. Homodimer.

The catalysed reaction is (6R)-5,10-methylene-5,6,7,8-tetrahydrofolate + NADP(+) = (6R)-5,10-methenyltetrahydrofolate + NADPH. It catalyses the reaction (6R)-5,10-methenyltetrahydrofolate + H2O = (6R)-10-formyltetrahydrofolate + H(+). The protein operates within one-carbon metabolism; tetrahydrofolate interconversion. Its function is as follows. Catalyzes the oxidation of 5,10-methylenetetrahydrofolate to 5,10-methenyltetrahydrofolate and then the hydrolysis of 5,10-methenyltetrahydrofolate to 10-formyltetrahydrofolate. The chain is Bifunctional protein FolD from Dehalococcoides mccartyi (strain ATCC BAA-2266 / KCTC 15142 / 195) (Dehalococcoides ethenogenes (strain 195)).